Here is a 389-residue protein sequence, read N- to C-terminus: Flagellar P-ring protein (389 aa).

The N-terminal stretch at methionine 1–alanine 33 is a signal peptide.

This sequence belongs to the FlgI family. As to quaternary structure, the basal body constitutes a major portion of the flagellar organelle and consists of four rings (L,P,S, and M) mounted on a central rod.

Its subcellular location is the periplasm. The protein localises to the bacterial flagellum basal body. Assembles around the rod to form the L-ring and probably protects the motor/basal body from shearing forces during rotation. The polypeptide is Flagellar P-ring protein (Burkholderia mallei (strain ATCC 23344)).